We begin with the raw amino-acid sequence, 469 residues long: tRNA(Ile)-lysidine synthase (469 aa).

An ATP-binding site is contributed by 26-31 (SGGPDS).

The protein belongs to the tRNA(Ile)-lysidine synthase family.

The protein localises to the cytoplasm. The catalysed reaction is cytidine(34) in tRNA(Ile2) + L-lysine + ATP = lysidine(34) in tRNA(Ile2) + AMP + diphosphate + H(+). Ligates lysine onto the cytidine present at position 34 of the AUA codon-specific tRNA(Ile) that contains the anticodon CAU, in an ATP-dependent manner. Cytidine is converted to lysidine, thus changing the amino acid specificity of the tRNA from methionine to isoleucine. This is tRNA(Ile)-lysidine synthase from Clostridium perfringens (strain 13 / Type A).